Reading from the N-terminus, the 357-residue chain is Eukaryotic translation initiation factor 3 subunit F (357 aa).

An MPN domain is found at 30–169 (VHIQPQAVFS…TKAYISAPVA (140 aa)). Residues 309–357 (VGGDKEGGEKGKDGEDGGRGGRGGKRGGGGRGGHRGEPREPREPREPAE) form a disordered region. 2 stretches are compositionally biased toward basic and acidic residues: residues 311-327 (GDKE…DGGR) and 342-357 (HRGE…EPAE).

It belongs to the eIF-3 subunit F family. In terms of assembly, component of the eukaryotic translation initiation factor 3 (eIF-3) complex.

Its subcellular location is the cytoplasm. Functionally, component of the eukaryotic translation initiation factor 3 (eIF-3) complex, which is involved in protein synthesis of a specialized repertoire of mRNAs and, together with other initiation factors, stimulates binding of mRNA and methionyl-tRNAi to the 40S ribosome. The eIF-3 complex specifically targets and initiates translation of a subset of mRNAs involved in cell proliferation. This Chaetomium globosum (strain ATCC 6205 / CBS 148.51 / DSM 1962 / NBRC 6347 / NRRL 1970) (Soil fungus) protein is Eukaryotic translation initiation factor 3 subunit F.